Consider the following 732-residue polypeptide: Lanosterol synthase (732 aa).

Position 2 is an N-acetylthreonine (T2). PFTB repeat units lie at residues 77–121 (ALNG…PLPA), 124–165 (REEI…RILG), 424–468 (PDNP…LLLQ), 483–528 (LCDA…MIDY), 560–600 (LTQG…ACMG), 612–653 (VSRA…HNTC), and 670–712 (QERG…NIFP). The active-site Proton donor is the D455.

This sequence belongs to the terpene cyclase/mutase family. Monomer. As to expression, widely expressed. Expressed in the hair bulb, the outer root sheath and hair matrix of the hair follicle epithelium. Also detected in dermal papilla, epidermis, sweat glands, sebaceous glands, and blood vessels.

Its subcellular location is the endoplasmic reticulum membrane. The catalysed reaction is (S)-2,3-epoxysqualene = lanosterol. It participates in terpene metabolism; lanosterol biosynthesis; lanosterol from farnesyl diphosphate: step 3/3. In terms of biological role, key enzyme in the cholesterol biosynthesis pathway. Catalyzes the cyclization of (S)-2,3 oxidosqualene to lanosterol, a reaction that forms the sterol nucleus. Through the production of lanosterol may regulate lens protein aggregation and increase transparency. The chain is Lanosterol synthase (LSS) from Homo sapiens (Human).